The primary structure comprises 800 residues: Fibroblast growth factor receptor 4 (800 aa).

A signal peptide spans 1–16 (MWLLLALLSIFQETPA). 3 consecutive Ig-like C2-type domains span residues 17–115 (FSLE…LIMD), 148–236 (PQRM…YLLD), and 245–345 (PILQ…AWLT). The Extracellular portion of the chain corresponds to 17–367 (FSLEASEEME…TATSEARYTD (351 aa)). Cys54 and Cys98 form a disulfide bridge. The N-linked (GlcNAc...) asparagine glycan is linked to Asn109. Cys168 and Cys220 form a disulfide bridge. Asn254, Asn286, and Asn307 each carry an N-linked (GlcNAc...) asparagine glycan. A disulfide bridge links Cys267 with Cys329. Residues 368–388 (IILYVSGSLALVLLLLLAGVY) form a helical membrane-spanning segment. Residues 389-800 (HRQAIHGHHS…PFPFPEAQTT (412 aa)) are Cytoplasmic-facing. In terms of domain architecture, Protein kinase spans 465–753 (LVLGKPLGEG…VLLAVSEEYL (289 aa)). Residues 471–479 (LGEGCFGQV) and Lys501 contribute to the ATP site. Phosphoserine is present on Ser571. Asp610 (proton acceptor) is an active-site residue. Phosphotyrosine; by autocatalysis occurs at positions 640, 641, and 752. Residues 768 to 800 (DASSTCSSSDSVFSHDPLPLEPSPFPFPEAQTT) form a disordered region. The segment covering 770 to 781 (SSTCSSSDSVFS) has biased composition (low complexity).

It belongs to the protein kinase superfamily. Tyr protein kinase family. Fibroblast growth factor receptor subfamily. Monomer. Homodimer after ligand binding. Interacts with FGF1, FGF2, FGF4, FGF6, FGF8, FGF9, FGF16, FGF17, FGF18, FGF19, FGF21 and FGF23 (in vitro). Binding affinity for FGF family members is enhanced by interactions between FGFs and heparan sulfate proteoglycans. Interacts with KLB; this strongly increases the affinity for FGF19 and FGF23. Affinity for FGF19 is strongly increased by KLB and sulfated glycosaminoglycans. KLB and KL both interact with the core-glycosylated FGFR4 in the endoplasmic reticulum and promote its degradation, so that only FGFR4 with fully mature N-glycans is expressed at the cell surface. Identified in a complex with NCAM1, CDH2, PLCG1, FRS2, SRC, SHC1, GAP43 and CTTN. Interacts with MMP14 and HIP1. Interacts with STAT3. N-glycosylated. Full maturation of the glycan chains in the Golgi is essential for high affinity interaction with FGF19. In terms of processing, ubiquitinated. Subject to proteasomal degradation when not fully glycosylated. Post-translationally, autophosphorylated. Binding of FGF family members together with heparan sulfate proteoglycan or heparin promotes receptor dimerization and autophosphorylation on tyrosine residues. Autophosphorylation occurs in trans between the two FGFR molecules present in the dimer.

The protein localises to the cell membrane. Its subcellular location is the endosome. It localises to the endoplasmic reticulum. It catalyses the reaction L-tyrosyl-[protein] + ATP = O-phospho-L-tyrosyl-[protein] + ADP + H(+). With respect to regulation, present in an inactive conformation in the absence of bound ligand. Ligand binding leads to dimerization and activation by autophosphorylation on tyrosine residues. Its function is as follows. Tyrosine-protein kinase that acts as a cell-surface receptor for fibroblast growth factors and plays a role in the regulation of cell proliferation, differentiation and migration, and in regulation of lipid metabolism, bile acid biosynthesis, glucose uptake, vitamin D metabolism and phosphate homeostasis. Required for normal down-regulation of the expression of CYP7A1, the rate-limiting enzyme in bile acid synthesis, in response to FGF19. Phosphorylates PLCG1 and FRS2. Ligand binding leads to the activation of several signaling cascades. Activation of PLCG1 leads to the production of the cellular signaling molecules diacylglycerol and inositol 1,4,5-trisphosphate. Phosphorylation of FRS2 triggers recruitment of GRB2, GAB1, PIK3R1 and SOS1, and mediates activation of RAS, MAPK1/ERK2, MAPK3/ERK1 and the MAP kinase signaling pathway, as well as of the AKT1 signaling pathway. Promotes SRC-dependent phosphorylation of the matrix protease MMP14 and its lysosomal degradation. FGFR4 signaling is down-regulated by receptor internalization and degradation; MMP14 promotes internalization and degradation of FGFR4. The polypeptide is Fibroblast growth factor receptor 4 (Fgfr4) (Rattus norvegicus (Rat)).